A 1333-amino-acid polypeptide reads, in one-letter code: MHSTTNNSNKRNNEEKHKQPEANGSADNGEGASGTRNQTAGDTTPEAGTRNETEAGAGARGQTDGASRSGTNAKVATASSARQMDMEKAAETTSTIENVNDVGIMQQKKPPTVIQSRTDVFNEQFANEALHPTTKVIFNGLDVNTEVQPLSDDFEQISDPKGYLTYSVKYEDQFAKKDKLRASEADDRIVGPTVNLFKYGSAVVNIDLNQDFFDTTTGINLTKGILLVQDLLVPIGVTAGAEQSSEYVSGLLMVLFKVMTDNRLVIVGETTTPISNTLSTVVNNILRTTYHNNVGINPALLRDFTHVNWLNQDITNMLQQAGTRFGLGLTATRLDYVRLVKTIVGYALDIDHFAASVLNINLRALMEANVTADDRIKALQAHSMISTQFHGPNQGALRPELAFDHDHVIRCLMLAAANYPRLEGIIVQINTGYVASTNVIRPVSEKRYFPENLEQNQSAARLVSAVKARASEADISSIHLAIAREVSPMFNVHELKKIAESFEDPSSIVVVLEFILFSLFFPTEFNRIKGDIQNVLLLFFSRWYPVEYGIFIQRGATYTINAAGEFEFSGRNEKWDQSSYLSEHFPALFSDVPLAGANTIIAIMRLFTPQGFLRTDDLAIAANFPRASRNPQTYIPYTNQRGTVTNEFASRFRTIVATLANVVNERAVQDDMQKATRSCTKQWLRHLETQFDNIAVAHTDHLSVVYATMSNFMLNFTNNFSGNHATFKPEQYVITSPEGSYKPIMERQGETVDGLTIIDTSIVWPILCQCTYPLVRQSGKGVDAVSIMEEIVYPDPGTTLSQSLSVAQILSKLTLPDAFINMILSGGDSVAMRTYQTEANDELDEGIRMTTYDQYLSHIRERLHITNVPDPIYITGASTPDQIAASVQATHVAVVLYQNGVINGPASTYLRENEVLVVMPDYSNVAARFVYANAQMNNNRYHESVLEIADIFDQADFIQTDNAVRRLRALMPTLSTSQIRHAIERIAQITNVDSTDYGKLTLRFLGTLTRPLKMQNAQIRRIRPDGTVLRYDDQIDIEAFRWSRYFLDELQLRRLAVGLRLIANPRIARRFNGVRIMYLTDDDPDPDFVPAIPEGYVAVQYAHRLFSSSLANKRNRVTYTHPPTGMAYPSPTGRPHVHLTINERAGMSKLVADNIIASVIKSNWVVDILDIEYTAEVMTPSEGYTQHVDAESIMTAPKGKLFHLQFMDGLLRPEPSAFDPPASGEDIRLIYPLQPISVARSMRAIVNHNEVDRPRGAVAPSSYEMDTGTLSRNGDLLYSPVENGQAGIPKLEVDHISFSNVVSMMTSNIRTGDDMAVERVNPSDIRAINIRNA.

Positions 1–10 (MHSTTNNSNK) are enriched in polar residues. The interval 1–93 (MHSTTNNSNK…MDMEKAAETT (93 aa)) is disordered. Over residues 11 to 20 (RNNEEKHKQP) the composition is skewed to basic and acidic residues. Polar residues predominate over residues 64–82 (DGASRSGTNAKVATASSAR).

The protein belongs to the turreted BTV-fold inner capsid family. As to quaternary structure, homodecamer; each decamer is made up of two conformers of VP2, called VP2A and VP2B. 12 homodecamers assemble to form an icosahedral capsid.

Its subcellular location is the virion. In terms of biological role, inner capsid protein that self-assembles to form an icosahedral capsid with a T=2 symmetry, which consists of 120 copies of VP2, with channels at each of its five-fold vertices. This capsid constitutes the innermost concentric layer of the viral mature particle. This is Inner capsid protein VP1 (S1) from Lymantria dispar cypovirus 1 (isolate Rao) (LdCPV-1).